Consider the following 295-residue polypeptide: Acetyl-coenzyme A carboxylase carboxyl transferase subunit beta (295 aa).

A disordered region spans residues 1-20 (MSWLSKLMPSGIRTENTPAK). A CoA carboxyltransferase N-terminal domain is found at 28 to 295 (LWEKCSNCGS…QPHPQDADAA (268 aa)). Residues C32, C35, C51, and C54 each contribute to the Zn(2+) site. Residues 32–54 (CSNCGSALYGPELEENLEVCPKC) form a C4-type zinc finger.

It belongs to the AccD/PCCB family. As to quaternary structure, acetyl-CoA carboxylase is a heterohexamer composed of biotin carboxyl carrier protein (AccB), biotin carboxylase (AccC) and two subunits each of ACCase subunit alpha (AccA) and ACCase subunit beta (AccD). Requires Zn(2+) as cofactor.

The protein resides in the cytoplasm. It carries out the reaction N(6)-carboxybiotinyl-L-lysyl-[protein] + acetyl-CoA = N(6)-biotinyl-L-lysyl-[protein] + malonyl-CoA. It participates in lipid metabolism; malonyl-CoA biosynthesis; malonyl-CoA from acetyl-CoA: step 1/1. In terms of biological role, component of the acetyl coenzyme A carboxylase (ACC) complex. Biotin carboxylase (BC) catalyzes the carboxylation of biotin on its carrier protein (BCCP) and then the CO(2) group is transferred by the transcarboxylase to acetyl-CoA to form malonyl-CoA. This Xanthomonas euvesicatoria pv. vesicatoria (strain 85-10) (Xanthomonas campestris pv. vesicatoria) protein is Acetyl-coenzyme A carboxylase carboxyl transferase subunit beta.